Consider the following 395-residue polypeptide: Elongation factor Tu (395 aa).

Residues 10–204 form the tr-type G domain; sequence KPHVNIGTIG…TVDSYIPEPA (195 aa). Residues 19–26 are G1; the sequence is GHVDHGKT. 19 to 26 contacts GTP; sequence GHVDHGKT. Residue T26 coordinates Mg(2+). Residues 60 to 64 are G2; it reads GITIN. Positions 81–84 are G3; the sequence is DAPG. GTP is bound by residues 81–85 and 136–139; these read DAPGH and NKTD. Residues 136 to 139 form a G4 region; sequence NKTD. The interval 174–176 is G5; sequence SAL.

This sequence belongs to the TRAFAC class translation factor GTPase superfamily. Classic translation factor GTPase family. EF-Tu/EF-1A subfamily. As to quaternary structure, monomer.

It localises to the cytoplasm. It carries out the reaction GTP + H2O = GDP + phosphate + H(+). Its function is as follows. GTP hydrolase that promotes the GTP-dependent binding of aminoacyl-tRNA to the A-site of ribosomes during protein biosynthesis. In Leuconostoc mesenteroides subsp. mesenteroides (strain ATCC 8293 / DSM 20343 / BCRC 11652 / CCM 1803 / JCM 6124 / NCDO 523 / NBRC 100496 / NCIMB 8023 / NCTC 12954 / NRRL B-1118 / 37Y), this protein is Elongation factor Tu.